Here is a 130-residue protein sequence, read N- to C-terminus: Small ribosomal subunit protein uS12c (130 aa).

It belongs to the universal ribosomal protein uS12 family. As to quaternary structure, part of the 30S ribosomal subunit.

Its subcellular location is the plastid. The protein localises to the chloroplast. In terms of biological role, with S4 and S5 plays an important role in translational accuracy. Located at the interface of the 30S and 50S subunits. This chain is Small ribosomal subunit protein uS12c (rps12), found in Tetradesmus obliquus (Green alga).